Here is a 530-residue protein sequence, read N- to C-terminus: Ubiquitin carboxyl-terminal hydrolase 17-like protein 5 (530 aa).

One can recognise a USP domain in the interval 80 to 375 (AGLQNMGNTC…QAYVLFYIQK (296 aa)). The Nucleophile role is filled by Cys-89. The active-site Proton acceptor is His-334. 2 stretches are compositionally biased toward basic and acidic residues: residues 382–392 (SESVSRGREPR) and 398–412 (DTDR…KRDH). Disordered stretches follow at residues 382–412 (SESV…KRDH) and 477–530 (NHHP…LVCQ). A compositionally biased stretch (polar residues) spans 493-505 (TPTHQESMNTGTL). Over residues 510-524 (GRARRSKGKNKHSKR) the composition is skewed to basic residues.

This sequence belongs to the peptidase C19 family. USP17 subfamily.

It localises to the nucleus. The protein resides in the endoplasmic reticulum. It carries out the reaction Thiol-dependent hydrolysis of ester, thioester, amide, peptide and isopeptide bonds formed by the C-terminal Gly of ubiquitin (a 76-residue protein attached to proteins as an intracellular targeting signal).. Deubiquitinating enzyme that removes conjugated ubiquitin from specific proteins to regulate different cellular processes that may include cell proliferation, progression through the cell cycle, apoptosis, cell migration, and the cellular response to viral infection. This chain is Ubiquitin carboxyl-terminal hydrolase 17-like protein 5 (USP17L5), found in Homo sapiens (Human).